A 257-amino-acid polypeptide reads, in one-letter code: Sulfur carrier protein FdhD (257 aa).

The active-site Cysteine persulfide intermediate is the Cys105.

Belongs to the FdhD family.

The protein resides in the cytoplasm. Its function is as follows. Required for formate dehydrogenase (FDH) activity. Acts as a sulfur carrier protein that transfers sulfur from IscS to the molybdenum cofactor prior to its insertion into FDH. This Saccharolobus solfataricus (strain ATCC 35092 / DSM 1617 / JCM 11322 / P2) (Sulfolobus solfataricus) protein is Sulfur carrier protein FdhD.